The following is a 74-amino-acid chain: DNA-directed RNA polymerase subunit omega (74 aa).

Belongs to the RNA polymerase subunit omega family. The RNAP catalytic core consists of 2 alpha, 1 beta, 1 beta' and 1 omega subunit. When a sigma factor is associated with the core the holoenzyme is formed, which can initiate transcription.

It catalyses the reaction RNA(n) + a ribonucleoside 5'-triphosphate = RNA(n+1) + diphosphate. Promotes RNA polymerase assembly. Latches the N- and C-terminal regions of the beta' subunit thereby facilitating its interaction with the beta and alpha subunits. The polypeptide is DNA-directed RNA polymerase subunit omega (Marinomonas sp. (strain MWYL1)).